The primary structure comprises 401 residues: Chalcone synthase 4 (401 aa).

C168 is a catalytic residue.

Belongs to the thiolase-like superfamily. Chalcone/stilbene synthases family.

It carries out the reaction (E)-4-coumaroyl-CoA + 3 malonyl-CoA + 3 H(+) = 2',4,4',6'-tetrahydroxychalcone + 3 CO2 + 4 CoA. Its pathway is secondary metabolite biosynthesis; flavonoid biosynthesis. Functionally, the primary product of this enzyme is 4,2',4',6'-tetrahydroxychalcone (also termed naringenin-chalcone or chalcone) which can under specific conditions spontaneously isomerize into naringenin. The protein is Chalcone synthase 4 (CHS4) of Sorghum bicolor (Sorghum).